Reading from the N-terminus, the 624-residue chain is MKGQETRGFQSEVKQLLHLMIHSLYSNKEIFLRELISNASDAADKLRFRALSNPDLYEGDGELRVRVSFDKDNRTLTIADNGIGMNRDEVIDHLGTIAKSGTKSFLESMGSDQAKDSQLIGQFGVGFYSAFIVADKVTVRTRAAGDSAENGVFWESHGEGEYTVDDITKADRGTEITLHLREGEDDFLNDWRVRSIISKYSDHIALPVEIEKREEQDGETVVSWEKINKAQALWTRNKSEIKDDEYNEFYKHIAHDFTDPLTWSHNRVEGKQEYTSLLYIPAQAPWDMWNRDHKHGLKLYVQRVFIMDDAEQFMPNYLRFTRGLIDSNDLPLNVSREILQDSTVTRNLRNALTKRTLQMLEKLAKDDAEKYQTFWKQFGLVLKEGPAEDSGNVESIAKLLRFASTHTDSSEQTVSLEDYVSRMKEGQEKIYYITADSYAAAKSSPHLELLRKKGIEVLLLSDRIDEWMMNYLTEFDGKAFQSVAKADESIDKLADEVDETAKEAEKALEPFVERVKTLLGDRVKEVRFTHRLTDTPAIVTTDADEMGTQMAKLFAAAGQAMPEVKYIFELNPDHPLVKRAADTQDEARFSEWVELLLDQSLLAERGTLEDPNQFIKRVNALLLG.

An a; substrate-binding region spans residues M1 to R336. The tract at residues E337–K552 is b. Residues L553–G624 form a c region.

This sequence belongs to the heat shock protein 90 family. Homodimer.

Its subcellular location is the cytoplasm. Functionally, molecular chaperone. Has ATPase activity. This is Chaperone protein HtpG from Enterobacter sp. (strain 638).